The following is a 393-amino-acid chain: Sulfite oxidase (393 aa).

The disordered stretch occupies residues 1–27 (MPGIRGPSEYSQEPPRHPSLKVNAKEP). The segment at 10–242 (YSQEPPRHPS…QGFFMQKDYK (233 aa)) is moco domain. Residues 49–53 (YKRNH), C98, 159–161 (SVD), H202, R207, and 218–220 (SVK) each bind Mo-molybdopterin. Residues 243–393 (MFPPSVNWDN…VLLRLGHSNL (151 aa)) are homodimerization. Positions 391 to 393 (SNL) match the Microbody targeting signal motif.

As to quaternary structure, predominantly monomer; also homodimer. Requires Mo-molybdopterin as cofactor.

The protein localises to the peroxisome. It carries out the reaction sulfite + O2 + H2O = sulfate + H2O2. It functions in the pathway energy metabolism; sulfur metabolism. Its function is as follows. Probably involved in sulfite oxidative detoxification. This is Sulfite oxidase (SOX) from Arabidopsis thaliana (Mouse-ear cress).